The chain runs to 511 residues: MNTQAILVLDFGSQYSQLIARRIREIGVYTKVIPYYTPLKEIKNMNISGIILSGSPASVYSKEAPTLNMEIFNLKIPILGICYGMQIIVKLFGGLVSKDSKQEYGSSEIFLRDEKSLLFSELPNKFQIIMSHGDSIEKIPDNFKQLAFTKNCIASISNETQKIYGLQFHPEVTHSEFGDQIIKNFVFKICQAQINWSLEGNLETIVKKIKLKVGSKKVILGLSGGTDSLVCALLIKKAINENLICVFVNTGLLRKNEDKKILELKHQYDLNIKYIDASTKFLNRLKNISDPEEKRKIIGKEFVDVFEKITLEDQNIEYLAQGTIYSDVIESKSKDSSSSKIKSHHNVGGLPDKMSLKLLEPLNEFFKDEIIQIGINLGIKKESLYRHPFPGPGLAIRIIGEVTQEKINILQEADNILTEELFINDLYYQIRQAFVVLLPVKSVGVMGDQRTYEYTAVIRCVNTQDFMTAEWTELPYSFLKKVSSRIINEVRGINRVCYDISSKPPSTIEWE.

A Glutamine amidotransferase type-1 domain is found at 5–195; sequence AILVLDFGSQ…VFKICQAQIN (191 aa). The active-site Nucleophile is Cys82. Active-site residues include His169 and Glu171. The region spanning 196 to 386 is the GMPS ATP-PPase domain; the sequence is WSLEGNLETI…LGIKKESLYR (191 aa). 223-229 is a binding site for ATP; that stretch reads SGGTDSL.

In terms of assembly, homodimer.

It carries out the reaction XMP + L-glutamine + ATP + H2O = GMP + L-glutamate + AMP + diphosphate + 2 H(+). It participates in purine metabolism; GMP biosynthesis; GMP from XMP (L-Gln route): step 1/1. In terms of biological role, catalyzes the synthesis of GMP from XMP. The protein is GMP synthase [glutamine-hydrolyzing] (guaA) of Borreliella burgdorferi (strain ATCC 35210 / DSM 4680 / CIP 102532 / B31) (Borrelia burgdorferi).